We begin with the raw amino-acid sequence, 323 residues long: Methionyl-tRNA formyltransferase (323 aa).

Residue 115 to 118 (SLLP) participates in (6S)-5,6,7,8-tetrahydrofolate binding.

It belongs to the Fmt family.

It carries out the reaction L-methionyl-tRNA(fMet) + (6R)-10-formyltetrahydrofolate = N-formyl-L-methionyl-tRNA(fMet) + (6S)-5,6,7,8-tetrahydrofolate + H(+). Its function is as follows. Attaches a formyl group to the free amino group of methionyl-tRNA(fMet). The formyl group appears to play a dual role in the initiator identity of N-formylmethionyl-tRNA by promoting its recognition by IF2 and preventing the misappropriation of this tRNA by the elongation apparatus. This chain is Methionyl-tRNA formyltransferase, found in Blochmanniella floridana.